Reading from the N-terminus, the 289-residue chain is Putative 2-aminoethylphosphonate transport system permease protein PhnU (289 aa).

6 helical membrane-spanning segments follow: residues Trp19 to Val39, Phe76 to Ile96, Phe111 to Gly131, Phe150 to Met170, Val202 to Thr222, and Tyr254 to Leu274. The 208-residue stretch at Leu68–Tyr275 folds into the ABC transmembrane type-1 domain.

This sequence belongs to the binding-protein-dependent transport system permease family.

The protein localises to the cell inner membrane. Probably part of the PhnSTUV complex (TC 3.A.1.11.5) involved in 2-aminoethylphosphonate import. Probably responsible for the translocation of the substrate across the membrane. This chain is Putative 2-aminoethylphosphonate transport system permease protein PhnU (phnU), found in Salmonella typhi.